We begin with the raw amino-acid sequence, 311 residues long: Malate dehydrogenase (311 aa).

NAD(+) contacts are provided by residues 7-13 (GAAGGIG) and aspartate 34. Substrate-binding residues include arginine 81 and arginine 87. NAD(+)-binding positions include asparagine 94 and 117-119 (ITN). The substrate site is built by asparagine 119 and arginine 153. Residue histidine 177 is the Proton acceptor of the active site. Methionine 227 contributes to the NAD(+) binding site.

This sequence belongs to the LDH/MDH superfamily. MDH type 1 family. Homodimer.

The catalysed reaction is (S)-malate + NAD(+) = oxaloacetate + NADH + H(+). Its function is as follows. Catalyzes the reversible oxidation of malate to oxaloacetate. This Erwinia tasmaniensis (strain DSM 17950 / CFBP 7177 / CIP 109463 / NCPPB 4357 / Et1/99) protein is Malate dehydrogenase.